A 123-amino-acid polypeptide reads, in one-letter code: WAP four-disulfide core domain protein 2 (123 aa).

The first 28 residues, 1 to 28, serve as a signal peptide directing secretion; that stretch reads MPASRLVPLGAVLLLGLLLLLELPPVTG. WAP domains lie at 30–71 and 74–122; these read GADK…SAIC and PNEK…VTPN. 8 disulfides stabilise this stretch: C37/C63, C46/C67, C50/C62, C56/C71, C81/C109, C92/C113, C96/C108, and C102/C118. N45 is a glycosylation site (N-linked (GlcNAc...) asparagine).

In terms of assembly, homotrimer; disulfide-linked. As to expression, epididymis.

It localises to the secreted. Functionally, broad range protease inhibitor. The protein is WAP four-disulfide core domain protein 2 (WFDC2) of Oryctolagus cuniculus (Rabbit).